The chain runs to 309 residues: tRNA N6-adenosine threonylcarbamoyltransferase (309 aa).

Fe cation-binding residues include H108 and H112. Substrate contacts are provided by residues 130 to 134 (LVSGG), D163, G176, D180, and N269. D293 serves as a coordination point for Fe cation.

This sequence belongs to the KAE1 / TsaD family. Requires Fe(2+) as cofactor.

Its subcellular location is the cytoplasm. The catalysed reaction is L-threonylcarbamoyladenylate + adenosine(37) in tRNA = N(6)-L-threonylcarbamoyladenosine(37) in tRNA + AMP + H(+). Required for the formation of a threonylcarbamoyl group on adenosine at position 37 (t(6)A37) in tRNAs that read codons beginning with adenine. Is involved in the transfer of the threonylcarbamoyl moiety of threonylcarbamoyl-AMP (TC-AMP) to the N6 group of A37, together with TsaE and TsaB. TsaD likely plays a direct catalytic role in this reaction. In Mycoplasmopsis agalactiae (strain NCTC 10123 / CIP 59.7 / PG2) (Mycoplasma agalactiae), this protein is tRNA N6-adenosine threonylcarbamoyltransferase.